We begin with the raw amino-acid sequence, 217 residues long: MEQPYVYAYPQGSGPSGAPTPQAGGVVVDPKYCAPYPIDMAIVRKMMSLTDGNFVITDVNGNLLFKVKEPVFGLHDKRVLLDGSGTPVVTLREKMVSMHDRWQVFRGGSTDQRDLLYTVKRSSMLQLKTKLDVFLGHNKDEKRCDFRVKGSWLERSCVVYAGESDAIVAQMHRKHTVQSVFLGKDNFSVTVYPNVDYAFIASLVVILDDVNREDRAA.

Met1 is modified (N-acetylmethionine).

It belongs to the LOR family.

Might be related to the phospholipid scramblase and tubby-like superfamily of membrane tethered transcription factors. In Arabidopsis thaliana (Mouse-ear cress), this protein is Protein LURP-one-related 15.